The chain runs to 391 residues: 3-ketoacyl-CoA thiolase (391 aa).

Catalysis depends on Cys95, which acts as the Acyl-thioester intermediate. Catalysis depends on proton acceptor residues His347 and Cys377.

Belongs to the thiolase-like superfamily. Thiolase family. As to quaternary structure, heterotetramer of two alpha chains (FadB) and two beta chains (FadA).

It localises to the cytoplasm. The enzyme catalyses an acyl-CoA + acetyl-CoA = a 3-oxoacyl-CoA + CoA. It functions in the pathway lipid metabolism; fatty acid beta-oxidation. Catalyzes the final step of fatty acid oxidation in which acetyl-CoA is released and the CoA ester of a fatty acid two carbons shorter is formed. In Pseudomonas putida (strain ATCC 47054 / DSM 6125 / CFBP 8728 / NCIMB 11950 / KT2440), this protein is 3-ketoacyl-CoA thiolase.